A 290-amino-acid polypeptide reads, in one-letter code: Probable septum site-determining protein MinC (290 aa).

The protein belongs to the MinC family. As to quaternary structure, interacts with MinD and FtsZ.

Cell division inhibitor that blocks the formation of polar Z ring septums. Rapidly oscillates between the poles of the cell to destabilize FtsZ filaments that have formed before they mature into polar Z rings. Prevents FtsZ polymerization. The sequence is that of Probable septum site-determining protein MinC from Heliobacterium modesticaldum (strain ATCC 51547 / Ice1).